The sequence spans 160 residues: Glutathione peroxidase homolog BsaA (160 aa).

Cys35 is a catalytic residue.

It belongs to the glutathione peroxidase family.

The chain is Glutathione peroxidase homolog BsaA (bsaA) from Bacillus subtilis (strain 168).